The following is a 324-amino-acid chain: Pseudouridylate synthase RPUSD4, mitochondrial (324 aa).

The transit peptide at 1–11 (MAAAGGGATRG) directs the protein to the mitochondrion. The active site involves Asp105.

This sequence belongs to the pseudouridine synthase RluA family.

It localises to the mitochondrion matrix. The protein resides in the nucleus. Its subcellular location is the cytoplasm. It carries out the reaction uridine in 5S rRNA = pseudouridine in 5S rRNA. It catalyses the reaction a uridine in tRNA = a pseudouridine in tRNA. The catalysed reaction is a uridine in mRNA = a pseudouridine in mRNA. Functionally, catalyzes uridine to pseudouridine isomerization (pseudouridylation) of different mitochondrial RNA substrates. Acts on position 1397 in 16S mitochondrial ribosomal RNA (16S mt-rRNA). This modification is required for the assembly of 16S mt-rRNA into a functional mitochondrial ribosome. Acts on position 39 in mitochondrial tRNA(Phe). Also catalyzes pseudouridylation of mRNAs in nucleus: acts as a regulator of pre-mRNA splicing by mediating pseudouridylation of pre-mRNAs at locations associated with alternatively spliced regions. Pseudouridylation of pre-mRNAs near splice sites directly regulates mRNA splicing and mRNA 3'-end processing. This chain is Pseudouridylate synthase RPUSD4, mitochondrial, found in Xenopus tropicalis (Western clawed frog).